The following is a 132-amino-acid chain: Cytochrome c-554 (132 aa).

An N-terminal signal peptide occupies residues 1–24 (MKSISMLTLAASVAFAVTAGQAVA). The Cytochrome c domain maps to 26-126 (GDPAAGEKVF…NVWAYLSQFG (101 aa)). Heme c-binding residues include cysteine 38, cysteine 41, histidine 42, and methionine 104.

In terms of processing, binds 1 heme c group covalently per subunit.

The protein resides in the periplasm. The polypeptide is Cytochrome c-554 (Methylosinus trichosporium).